The primary structure comprises 178 residues: Deoxycytidylate deaminase (178 aa).

A CMP/dCMP-type deaminase domain is found at 14–146 (EWPEYFMAVA…EATAARLLFD (133 aa)). His84 provides a ligand contact to Zn(2+). The Proton donor role is filled by Glu86. The Zn(2+) site is built by Cys110 and Cys113. A Phosphoserine modification is found at Ser174.

Belongs to the cytidine and deoxycytidylate deaminase family. In terms of assembly, homohexamer. The cofactor is Zn(2+).

The enzyme catalyses dCMP + H2O + H(+) = dUMP + NH4(+). It carries out the reaction 5-hydroxymethyl-dCMP + H2O + H(+) = 5-hydroxymethyl-dUMP + NH4(+). Its activity is regulated as follows. Allosteric enzyme whose activity is greatly influenced by the end products of its metabolic pathway, dCTP and dTTP. In terms of biological role, catalyzes the deamination of dCMP to dUMP, providing the nucleoside monophosphate substrate for the thymidylate synthase/TYMS. Also, part of a nucleotide salvage pathway that eliminates epigenetically modified 5-hydroxymethyl-dCMP (hmdCMP) in a two-step process entailing deamination to cytotoxic 5-hydroxymethyl-dUMP (hmdUMP), followed by its hydrolysis into 5-hydroxymethyluracil (hmU) and 2-deoxy-D-ribose 5-phosphate (deoxyribosephosphate). Catalyzes the first step in that pathway, the deamination of 5-hydroxymethyl-dCMP (hmdCMP). In Pongo abelii (Sumatran orangutan), this protein is Deoxycytidylate deaminase.